Here is a 500-residue protein sequence, read N- to C-terminus: ADP,ATP carrier protein 5 (500 aa).

Helical transmembrane passes span 21–41 (IYNY…CILF), 62–82 (IAGF…VIIY), 94–114 (IFYY…FVIY), 149–169 (YIVY…LLFW), 184–204 (FYTL…FLMM), 224–244 (ITLV…CCLL), 287–307 (LWLL…VEAV), 328–348 (LYIL…NNVM), 357–377 (AVIS…LIVF), 381–401 (ILSL…VSIG), and 469–489 (SISP…IYAV).

It belongs to the ADP/ATP translocase tlc family.

The protein localises to the cell membrane. Functionally, provides the rickettsial cell with host ATP in exchange for rickettsial ADP. This is an obligate exchange system. This energy acquiring activity is an important component of rickettsial parasitism. The sequence is that of ADP,ATP carrier protein 5 (tlcE) from Rickettsia bellii (strain RML369-C).